Reading from the N-terminus, the 447-residue chain is Eukaryotic translation initiation factor 3 subunit E (447 aa).

Residues 253–421 enclose the PCI domain; it reads LELFFNAGYI…GTVVMNHPPS (169 aa).

The protein belongs to the eIF-3 subunit E family. In terms of assembly, component of the eukaryotic translation initiation factor 3 (eIF-3) complex.

Its subcellular location is the cytoplasm. Functionally, component of the eukaryotic translation initiation factor 3 (eIF-3) complex, which is involved in protein synthesis of a specialized repertoire of mRNAs and, together with other initiation factors, stimulates binding of mRNA and methionyl-tRNAi to the 40S ribosome. The eIF-3 complex specifically targets and initiates translation of a subset of mRNAs involved in cell proliferation. The sequence is that of Eukaryotic translation initiation factor 3 subunit E from Chaetomium globosum (strain ATCC 6205 / CBS 148.51 / DSM 1962 / NBRC 6347 / NRRL 1970) (Soil fungus).